Reading from the N-terminus, the 550-residue chain is MAFSKLLEQAGGVGLFQTLQVLTFILPCLMIPSQMLLENFSAAIPGHRCWTHMLDNGSAVSTNMTPKALLTISIPPGPNQGPHQCRRFRQPQWQLLDPNATATSWSEADTEPCVDGWVYDRSVFTSTIVAKWDLVCSSQGLKPLSQSIFMSGILVGSFIWGLLSYRFGRKPMLSWCCLQLAVAGTSTIFAPTFVIYCGLRFVAAFGMAGIFLSSLTLMVEWTTTSRRAVTMTVVGCAFSAGQAALGGLAFALRDWRTLQLAASVPFFAISLISWWLPESARWLIIKGKPDQALQELRKVARINGHKEAKNLTIEVLMSSVKEEVASAKEPRSVLDLFCVPVLRWRSCAMLVVNFSLLISYYGLVFDLQSLGRDIFLLQALFGAVDFLGRATTALLLSFLGRRTIQAGSQAMAGLAILANMLVPQDLQTLRVVFAVLGKGCFGISLTCLTIYKAELFPTPVRMTADGILHTVGRLGAMMGPLILMSRQALPLLPPLLYGVISIASSLVVLFFLPETQGLPLPDTIQDLESQKSTAAQGNRQEAVTVESTSL.

At 1 to 10 (MAFSKLLEQA) the chain is on the cytoplasmic side. The helical transmembrane segment at 11–31 (GGVGLFQTLQVLTFILPCLMI) threads the bilayer. Residues 32 to 142 (PSQMLLENFS…DLVCSSQGLK (111 aa)) lie on the Extracellular side of the membrane. N-linked (GlcNAc...) asparagine glycans are attached at residues Asn-39, Asn-56, and Asn-99. The helical transmembrane segment at 143–163 (PLSQSIFMSGILVGSFIWGLL) threads the bilayer. Topologically, residues 164 to 174 (SYRFGRKPMLS) are cytoplasmic. A helical membrane pass occupies residues 175–195 (WCCLQLAVAGTSTIFAPTFVI). Over 196 to 200 (YCGLR) the chain is Extracellular. Residues 201 to 221 (FVAAFGMAGIFLSSLTLMVEW) traverse the membrane as a helical segment. Residues 222-231 (TTTSRRAVTM) lie on the Cytoplasmic side of the membrane. Residues 232–252 (TVVGCAFSAGQAALGGLAFAL) form a helical membrane-spanning segment. Residues 253 to 256 (RDWR) are Extracellular-facing. Residues 257 to 277 (TLQLAASVPFFAISLISWWLP) traverse the membrane as a helical segment. At 278 to 346 (ESARWLIIKG…FCVPVLRWRS (69 aa)) the chain is on the cytoplasmic side. A helical membrane pass occupies residues 347 to 367 (CAMLVVNFSLLISYYGLVFDL). At 368 to 378 (QSLGRDIFLLQ) the chain is on the extracellular side. A helical membrane pass occupies residues 379 to 399 (ALFGAVDFLGRATTALLLSFL). The Cytoplasmic segment spans residues 400–402 (GRR). A helical transmembrane segment spans residues 403–423 (TIQAGSQAMAGLAILANMLVP). Topologically, residues 424–430 (QDLQTLR) are extracellular. Residues 431-451 (VVFAVLGKGCFGISLTCLTIY) traverse the membrane as a helical segment. Topologically, residues 452-463 (KAELFPTPVRMT) are cytoplasmic. A helical membrane pass occupies residues 464–484 (ADGILHTVGRLGAMMGPLILM). At 485-490 (SRQALP) the chain is on the extracellular side. A helical membrane pass occupies residues 491-511 (LLPPLLYGVISIASSLVVLFF). Topologically, residues 512–550 (LPETQGLPLPDTIQDLESQKSTAAQGNRQEAVTVESTSL) are cytoplasmic. Positions 531–550 (KSTAAQGNRQEAVTVESTSL) are disordered.

Belongs to the major facilitator (TC 2.A.1) superfamily. Organic cation transporter (TC 2.A.1.19) family. Post-translationally, N-glycosylated. Contains several complex-type N-glycans. In terms of tissue distribution, expressed in placental trophoblasts, syncytiotrophoblast and cytotrophoblast. Also located in the proximal tubules in kidneys.

It is found in the cell membrane. The protein localises to the apical cell membrane. The protein resides in the basal cell membrane. The enzyme catalyses estrone 3-sulfate(out) + glutarate(in) = estrone 3-sulfate(in) + glutarate(out). It catalyses the reaction dehydroepiandrosterone 3-sulfate(out) = dehydroepiandrosterone 3-sulfate(in). The catalysed reaction is prostaglandin F2alpha(out) = prostaglandin F2alpha(in). It carries out the reaction prostaglandin E2(out) = prostaglandin E2(in). Antiporter that mediates the transport of conjugated steroids and other specific organic anions at the basal membrane of syncytiotrophoblast and at the apical membrane of proximal tubule epithelial cells, in exchange for anionic compounds. May be responsible for placental absorption of fetal-derived steroid sulfates such as estrone sulfate (E1S) and the steroid hormone precursor dehydroepiandrosterone sulfate (DHEA-S), as well as clearing waste products and xenobiotics from the fetus. Maybe also be involved in placental urate homeostasis. Facilitates the renal reabsorption of organic anions such as urate and derived steroid sulfates. Organic anion glutarate acts as conteranion for E1S renal uptake. Possible transport mode may also include DHEA-S/E1S exchange. Also interacts with inorganic anions such as chloride and hydroxyl ions, therefore possible transport modes may include E1S/Cl(-), E1S/OH(-), urate/Cl(-) and urate/OH(-). Also mediates the transport of prostaglandin E2 (PGE2) and prostaglandin F2-alpha (PGF2-alpha) and may be involved in their renal excretion. Also able to uptake anionic drugs, diuretics, bile salts and ochratoxin A. Mediates the unidirectional efflux of glutamate and aspartate. Glutamate efflux down its transmembrane gradient may drive SLC22A11/OAT4-mediated placental uptake of E1S. In Homo sapiens (Human), this protein is Solute carrier family 22 member 11.